The primary structure comprises 359 residues: Type-1 angiotensin II receptor (359 aa).

Residues Met-1–Ser-25 are Extracellular-facing. Asn-4 carries an N-linked (GlcNAc...) asparagine glycan. Asp-17 provides a ligand contact to angiotensin II. Intrachain disulfides connect Cys-18–Cys-274 and Cys-101–Cys-180. A helical transmembrane segment spans residues Tyr-26 to Cys-55. The Cytoplasmic segment spans residues Tyr-56–Thr-61. A helical transmembrane segment spans residues Val-62 to Ala-89. The Extracellular portion of the chain corresponds to Met-90–Asn-98. The helical transmembrane segment at Cys-99 to Asp-125 threads the bilayer. Residues Arg-126 to Thr-141 are Cytoplasmic-facing. The helical transmembrane segment at Met-142–Ile-165 threads the bilayer. The Extracellular segment spans residues His-166–Thr-190. Arg-167 contributes to the angiotensin II binding site. N-linked (GlcNAc...) asparagine glycosylation is present at Asn-176. Residues Phe-182 and Tyr-184 each contribute to the angiotensin II site. 2 N-linked (GlcNAc...) asparagine glycosylation sites follow: Asn-187 and Asn-188. A helical transmembrane segment spans residues Leu-191 to Thr-216. Angiotensin II is bound at residue Lys-199. The Cytoplasmic segment spans residues Leu-217–Phe-239. Residues Lys-240–Leu-268 form a helical membrane-spanning segment. The Extracellular portion of the chain corresponds to His-269–Asp-278. The chain crosses the membrane as a helical span at residues Ile-279–Phe-304. The Cytoplasmic portion of the chain corresponds to Phe-305–Glu-359.

Belongs to the G-protein coupled receptor 1 family. Post-translationally, C-terminal Ser or Thr residues may be phosphorylated.

Its subcellular location is the cell membrane. Receptor for angiotensin II, a vasoconstricting peptide, which acts as a key regulator of blood pressure and sodium retention by the kidney. The activated receptor in turn couples to G-alpha proteins G(q) (GNAQ, GNA11, GNA14 or GNA15) and thus activates phospholipase C and increases the cytosolic Ca(2+) concentrations, which in turn triggers cellular responses such as stimulation of protein kinase C. The polypeptide is Type-1 angiotensin II receptor (AGTR1) (Gallus gallus (Chicken)).